The chain runs to 531 residues: Ribosomal protein uS12 methylthiotransferase RimO (531 aa).

Composition is skewed to polar residues over residues 1–19 (MPNI…SQPA) and 55–67 (HNQN…SSEV). The interval 1-77 (MPNISTESVN…VSAASAKTTT (77 aa)) is disordered. Positions 68 to 77 (VSAASAKTTT) are enriched in low complexity. An MTTase N-terminal domain is found at 88–198 (PKIGFVSLGC…VIRAVALHVP (111 aa)). [4Fe-4S] cluster-binding residues include Cys-97, Cys-133, Cys-162, Cys-236, Cys-240, and Cys-243. In terms of domain architecture, Radical SAM core spans 222–459 (LTPSHYAYLK…MTLQQDISAQ (238 aa)). The 70-residue stretch at 462–531 (QEKIGKTLMV…EYDLFASYKG (70 aa)) folds into the TRAM domain.

It belongs to the methylthiotransferase family. RimO subfamily. The cofactor is [4Fe-4S] cluster.

The protein resides in the cytoplasm. The catalysed reaction is L-aspartate(89)-[ribosomal protein uS12]-hydrogen + (sulfur carrier)-SH + AH2 + 2 S-adenosyl-L-methionine = 3-methylsulfanyl-L-aspartate(89)-[ribosomal protein uS12]-hydrogen + (sulfur carrier)-H + 5'-deoxyadenosine + L-methionine + A + S-adenosyl-L-homocysteine + 2 H(+). In terms of biological role, catalyzes the methylthiolation of an aspartic acid residue of ribosomal protein uS12. This is Ribosomal protein uS12 methylthiotransferase RimO from Psychrobacter cryohalolentis (strain ATCC BAA-1226 / DSM 17306 / VKM B-2378 / K5).